Here is a 557-residue protein sequence, read N- to C-terminus: Organic cation/carnitine transporter 2 (557 aa).

Residues 1 to 20 (MRDYDEVTAFLGEWGPFQRL) are Cytoplasmic-facing. Residues 21–41 (IFFLLSASIIPNGFNGMSIVF) traverse the membrane as a helical segment. The Extracellular segment spans residues 42–142 (LAGTPEHRCL…DLVCKDDWKA (101 aa)). Asn-57, Asn-64, and Asn-91 each carry an N-linked (GlcNAc...) asparagine glycan. Residues 143–163 (PLTTSLFFVGVLMGSFISGQL) form a helical membrane-spanning segment. At 164 to 172 (SDRFGRKNV) the chain is on the cytoplasmic side. The helical transmembrane segment at 173–193 (LFLTMGMQTGFSFLQLFSVNF) threads the bilayer. The Extracellular portion of the chain corresponds to 194–197 (EMFT). Residues 198-218 (VLFVLVGMGQISNYVAAFVLG) form a helical membrane-spanning segment. 218-225 (GTEILSKS) serves as a coordination point for ATP. The Cytoplasmic segment spans residues 219-232 (TEILSKSIRIIFAT). Residues 233 to 253 (LGVCIFYAFGFMVLPLFAYFI) form a helical membrane-spanning segment. The Extracellular segment spans residues 254–257 (RDWR). Residues 258 to 278 (MLLLALTVPGVLCGALWWFIP) traverse the membrane as a helical segment. At 279-341 (ESPRWLISQG…YDLVRTRNIR (63 aa)) the chain is on the cytoplasmic side. The helical transmembrane segment at 342–362 (IITIMSIILWLTISVGYFGLS) threads the bilayer. Residues 363-373 (LDTPNLHGDIY) lie on the Extracellular side of the membrane. A helical membrane pass occupies residues 374–394 (VNCFLLAAVEVPAYVLAWLLL). The Cytoplasmic portion of the chain corresponds to 395–406 (QHLPRRYSISAA). A helical membrane pass occupies residues 407–427 (LFLGGSVLLFIQLVPSELFYL). Residues 428-430 (STA) are Extracellular-facing. A helical transmembrane segment spans residues 431–451 (LVMVGKFGITSAYSMVYVYTA). At 452–462 (ELYPTVVRNMG) the chain is on the cytoplasmic side. Residues 463–483 (VGVSSTASRLGSILSPYFVYL) traverse the membrane as a helical segment. The Extracellular segment spans residues 484-488 (GAYDR). Tyr-486 is modified (phosphotyrosine). Residues 489 to 509 (FLPYILMGSLTILTAILTLFF) traverse the membrane as a helical segment. Over 510–557 (PESFGAPLPDTIDQMLRVKGIKQWQIQSQTRTQKDGGESPTVLKSTAF) the chain is Cytoplasmic. Residues 537–557 (SQTRTQKDGGESPTVLKSTAF) form a disordered region. Position 548 is a phosphoserine (Ser-548). A Phosphothreonine modification is found at Thr-550.

Belongs to the major facilitator (TC 2.A.1) superfamily. Organic cation transporter (TC 2.A.1.19) family. As to quaternary structure, interacts with PDZK1. As to expression, expressed in the proximal and distal tubules and in the glomeruli in the kidney, in the myocardium, valves, and arterioles in the heart, in the labyrinthine layer of the placenta, and in the cortex, hippocampus, and cerebellum in the brain. Expressed in Sertoli cells in testis.

It is found in the cell membrane. It localises to the apical cell membrane. Its subcellular location is the basal cell membrane. It catalyses the reaction (R)-carnitine(out) + Na(+)(out) = (R)-carnitine(in) + Na(+)(in). The catalysed reaction is O-acetyl-(R)-carnitine(out) + Na(+)(out) = O-acetyl-(R)-carnitine(in) + Na(+)(in). It carries out the reaction O-propanoyl-(R)-carnitine(out) + Na(+)(out) = O-propanoyl-(R)-carnitine(in) + Na(+)(in). The enzyme catalyses glycine betaine(out) + Na(+)(out) = glycine betaine(in) + Na(+)(in). It catalyses the reaction glycine betaine(out) + (R)-carnitine(in) = glycine betaine(in) + (R)-carnitine(out). The catalysed reaction is O-butanoyl-(R)-carnitine(out) + Na(+)(out) = O-butanoyl-(R)-carnitine(in) + Na(+)(in). It carries out the reaction (S)-carnitine(out) + Na(+)(out) = (S)-carnitine(in) + Na(+)(in). The enzyme catalyses an O-acyl-(R)-carnitine(out) + Na(+)(out) = an O-acyl-(R)-carnitine(in) + Na(+)(in). It catalyses the reaction L-glutamyl-L-arginyl-glycyl-L-methionyl-L-threonine(out) + Na(+)(out) = L-glutamyl-L-arginyl-glycyl-L-methionyl-L-threonine(in) + Na(+)(in). The catalysed reaction is N,N-dimethylglycine(out) + Na(+)(out) = N,N-dimethylglycine(in) + Na(+)(in). With respect to regulation, inhibited by emetine, quinidine and verapamil. The IC(50) of emetine is 4.2 uM. Not inhibited by valproic acid. Transport of (R)-carnitine is stimulated by cholesterol in the plasma membrane. Functionally, sodium-ion dependent, high affinity carnitine transporter. Involved in the active cellular uptake of carnitine. Transports one sodium ion with one molecule of carnitine. Also transports organic cations such as tetraethylammonium (TEA) without the involvement of sodium. Also relative uptake activity ratio of carnitine to TEA is 11.3. May also contribute to regulate the transport of organic compounds in testis across the blood-testis-barrier. In Rattus norvegicus (Rat), this protein is Organic cation/carnitine transporter 2 (Slc22a5).